The sequence spans 417 residues: Phosphoribosylamine--glycine ligase (417 aa).

The ATP-grasp domain maps to 107 to 313; that stretch reads KQIMAKYEIP…FLEIIEATLE (207 aa). Position 133–194 (133–194) interacts with ATP; the sequence is LKETWYPVVI…EEMLYGKEAS (62 aa). Residues glutamate 283 and asparagine 285 each coordinate Mg(2+).

It belongs to the GARS family. Mg(2+) serves as cofactor. The cofactor is Mn(2+).

The enzyme catalyses 5-phospho-beta-D-ribosylamine + glycine + ATP = N(1)-(5-phospho-beta-D-ribosyl)glycinamide + ADP + phosphate + H(+). Its pathway is purine metabolism; IMP biosynthesis via de novo pathway; N(1)-(5-phospho-D-ribosyl)glycinamide from 5-phospho-alpha-D-ribose 1-diphosphate: step 2/2. The protein is Phosphoribosylamine--glycine ligase of Caldanaerobacter subterraneus subsp. tengcongensis (strain DSM 15242 / JCM 11007 / NBRC 100824 / MB4) (Thermoanaerobacter tengcongensis).